The following is a 425-amino-acid chain: uncharacterized protein (425 aa).

The CHY-type zinc finger occupies 135-202; it reads KEQEILGCSH…AAQYCKYCKN (68 aa). Zn(2+)-binding residues include cysteine 142, histidine 144, cysteine 153, cysteine 156, cysteine 162, cysteine 165, histidine 166, histidine 172, cysteine 184, cysteine 187, cysteine 197, cysteine 200, cysteine 209, cysteine 212, histidine 225, cysteine 226, cysteine 229, cysteine 232, histidine 244, cysteine 245, cysteine 248, cysteine 251, histidine 260, and cysteine 262. The CTCHY-type zinc finger occupies 204–270; sequence MGRYYCNKCK…RCIERSTDCN (67 aa). The segment at 271-313 adopts an RING-type; atypical zinc-finger fold; sequence CPICGEYMFNSRERVIFLSCSHPLHQRCHEEYIRTNYRCPTCY.

This is an uncharacterized protein from Schizosaccharomyces pombe (strain 972 / ATCC 24843) (Fission yeast).